The chain runs to 37 residues: Esculentin-2Ra (37 aa).

Cys31 and Cys37 are joined by a disulfide.

As to expression, expressed by the skin glands.

It is found in the secreted. Its function is as follows. Antimicrobial peptide. The sequence is that of Esculentin-2Ra from Pelophylax ridibundus (Marsh frog).